Reading from the N-terminus, the 132-residue chain is MDYEEQLDRAMDEKPDVTGSETRFEVPDPNVRKEGNVTVYENFQATLDALSRTQDHVLKFLQNEVGTSASIDESGRARLTGEFGQRRVSDTLDAYVETYVTCPECGLPDTNLETDGDTIQLHCEACGARSTV.

A disordered region spans residues 1-30; that stretch reads MDYEEQLDRAMDEKPDVTGSETRFEVPDPN.

The protein belongs to the eIF-2-beta/eIF-5 family. As to quaternary structure, heterotrimer composed of an alpha, a beta and a gamma chain.

Functionally, eIF-2 functions in the early steps of protein synthesis by forming a ternary complex with GTP and initiator tRNA. In Halobacterium salinarum (strain ATCC 29341 / DSM 671 / R1), this protein is Translation initiation factor 2 subunit beta.